We begin with the raw amino-acid sequence, 1050 residues long: Bifunctional glutamine synthetase adenylyltransferase/adenylyl-removing enzyme (1050 aa).

An adenylyl removase region spans residues 1–531; the sequence is MTDPLIHTRK…LHSQLFYRPL (531 aa). Positions 537 to 1050 are adenylyl transferase; the sequence is NLSVDAMKLS…LDSVEARREL (514 aa).

It belongs to the GlnE family. Mg(2+) is required as a cofactor.

It carries out the reaction [glutamine synthetase]-O(4)-(5'-adenylyl)-L-tyrosine + phosphate = [glutamine synthetase]-L-tyrosine + ADP. The catalysed reaction is [glutamine synthetase]-L-tyrosine + ATP = [glutamine synthetase]-O(4)-(5'-adenylyl)-L-tyrosine + diphosphate. In terms of biological role, involved in the regulation of glutamine synthetase GlnA, a key enzyme in the process to assimilate ammonia. When cellular nitrogen levels are high, the C-terminal adenylyl transferase (AT) inactivates GlnA by covalent transfer of an adenylyl group from ATP to specific tyrosine residue of GlnA, thus reducing its activity. Conversely, when nitrogen levels are low, the N-terminal adenylyl removase (AR) activates GlnA by removing the adenylyl group by phosphorolysis, increasing its activity. The regulatory region of GlnE binds the signal transduction protein PII (GlnB) which indicates the nitrogen status of the cell. This is Bifunctional glutamine synthetase adenylyltransferase/adenylyl-removing enzyme from Corynebacterium efficiens (strain DSM 44549 / YS-314 / AJ 12310 / JCM 11189 / NBRC 100395).